The following is a 324-amino-acid chain: Glutaminase 2 (324 aa).

Positions 75, 127, 171, 178, 202, 254, and 272 each coordinate substrate.

Belongs to the glutaminase family. As to quaternary structure, homotetramer.

It catalyses the reaction L-glutamine + H2O = L-glutamate + NH4(+). This Halalkalibacterium halodurans (strain ATCC BAA-125 / DSM 18197 / FERM 7344 / JCM 9153 / C-125) (Bacillus halodurans) protein is Glutaminase 2.